Consider the following 420-residue polypeptide: Histidine--tRNA ligase (420 aa).

Belongs to the class-II aminoacyl-tRNA synthetase family. Homodimer.

It localises to the cytoplasm. The enzyme catalyses tRNA(His) + L-histidine + ATP = L-histidyl-tRNA(His) + AMP + diphosphate + H(+). The polypeptide is Histidine--tRNA ligase (Streptomyces avermitilis (strain ATCC 31267 / DSM 46492 / JCM 5070 / NBRC 14893 / NCIMB 12804 / NRRL 8165 / MA-4680)).